The sequence spans 84 residues: Large ribosomal subunit protein bL27 (84 aa).

The tract at residues Met-1–Leu-21 is disordered.

Belongs to the bacterial ribosomal protein bL27 family.

In Trichlorobacter lovleyi (strain ATCC BAA-1151 / DSM 17278 / SZ) (Geobacter lovleyi), this protein is Large ribosomal subunit protein bL27.